The sequence spans 109 residues: Sperm-specific class P protein 9/11 (109 aa).

The MSP domain occupies 2–109 (SLTADPPACT…TVTIPMSATA (108 aa)).

Expressed at higher level in testis.

This chain is Sperm-specific class P protein 9/11 (ssp-9), found in Caenorhabditis elegans.